The chain runs to 872 residues: Alanine--tRNA ligase (872 aa).

Zn(2+)-binding residues include His-567, His-571, Cys-669, and His-673.

Belongs to the class-II aminoacyl-tRNA synthetase family. Zn(2+) serves as cofactor.

It localises to the cytoplasm. The catalysed reaction is tRNA(Ala) + L-alanine + ATP = L-alanyl-tRNA(Ala) + AMP + diphosphate. In terms of biological role, catalyzes the attachment of alanine to tRNA(Ala) in a two-step reaction: alanine is first activated by ATP to form Ala-AMP and then transferred to the acceptor end of tRNA(Ala). Also edits incorrectly charged Ser-tRNA(Ala) and Gly-tRNA(Ala) via its editing domain. This chain is Alanine--tRNA ligase, found in Streptococcus pneumoniae serotype 4 (strain ATCC BAA-334 / TIGR4).